Consider the following 205-residue polypeptide: Nuclear transcription factor Y subunit beta (205 aa).

An a domain region spans residues 1-50 (MDGDSSTTDASQLGIAGDYIGGSHYVIQPHDDTEDSMNDHEDTNGSKESF). A disordered region spans residues 24–50 (HYVIQPHDDTEDSMNDHEDTNGSKESF). The segment covering 37–50 (MNDHEDTNGSKESF) has biased composition (basic and acidic residues). The segment at 51-140 (REQDIYLPIA…PLKLYLQKFR (90 aa)) is b domain. The DNA-binding element occupies 57 to 63 (LPIANVA). Positions 84 to 95 (VQECVSEFISFI) are subunit association domain (SAD). Residues 141-201 (EAMKGEKGIG…SYQQISGVQQ (61 aa)) are c domain.

The protein belongs to the NFYB/HAP3 subunit family. Heterotrimeric transcription factor composed of three components, NF-YA, NF-YB and NF-YC. NF-YB and NF-YC must interact and dimerize for NF-YA association and DNA binding.

It localises to the nucleus. Its function is as follows. Component of the sequence-specific heterotrimeric transcription factor (NF-Y) which specifically recognizes a 5'-CCAAT-3' box motif found in the promoters of its target genes. NF-Y can function as both an activator and a repressor, depending on its interacting cofactors. This Gallus gallus (Chicken) protein is Nuclear transcription factor Y subunit beta (NFYB).